We begin with the raw amino-acid sequence, 2079 residues long: MKTGHRTVLLFGDVTDPWIEGIDHVYVQAAKKPWIRSFLEDLFSAIKTETKAMDRVLQEGFKDSSSFQELAERYRHAGDDFGMAHAMMIYAIRAVVLLETLSREPHILDESRPRPEVIGISGGLFSAAVMSISINFETLYAACIEAGRVWSRLCNLTLVRSRAMEESPGTWGWAILGIPAADLGKTLEQFQSSMGIHCSKRAKVGVIGDRWSTVIGPPSVLELTLSECPNLKNLPKDELNIHALQHTLSVSNSDIDYIVGNSPLLETPLPPGYRIHGLDDDFPEANYAEWRHLLRASAYQTLSRPLDIVQAVSNLNAALGVSKDIDAKIIGPSSHTTYLVKCLQTAGKEVLIQNGFPASPQTSGTNDGIAIVGMAGKGPGSDDLEEFWNVILKGLDLHEEVPSDRFNLEEYYSPKHPPAGPGRCTMTCRHGCFMNNPGHFDSKFFHISPREAMLMDPAHRLFLMNAYEALEMAGYSNGQTKSTNPTKIATFFGQCNDDWHVVGHRALGCDAYTLQAVQRAFGPGRLAFQFNWEGPTYALDSACAATSSCIHLACMSLITRDIDMAVAGAANVLSTPHSFTSLSRSGVLSDSGNCKTYRDDADGYCRADFSGAVVLKRLDDAIAQNDNILAVISSSARNHSGNSTSITTSDAAAQERLFQKVLRNARVTPQDISYVEMHGTGTQVGDKAEIGAVSSVFSKRIDGRPLNVGAIKANIGHSEAAAGMSSLLKSILMFQNSTIPPQAGMPHTLNPNFPPLHEINIQIPSEPLEFKTTDNKPRRILLNNFDAAGGNACLLLEDYTDTKERNADVRSAHTIVMSARTQSSQLLNKKRLLRWLRSKPNTRVEDLAYTTTARRMHHPIRSAIIASTTQEVIAKLEAEIERNDSSLVQRASPLVFVFTGQGSHYGGMGSELYGSSPIFRERVDLCASICAGYDFPPFLDIITNETVNVSTKNASQVQLAVLTLEMALTHFWRSAGIEPTMVIGHSLGEYAALHAAGVLSLADALYLVGHRSLLLLERCESDSCSMLSVSMSVDEVQAQLTRIRSSCNVACINSSTSTVVSGTAEDLAEFQSSITAQNAKVRAKKLSLPFAFHSFQMDPILEDYSRIAAGVTYSAPKIPVASTLLGSVVNREGIFTQEYMVQQTRQAADFMGGLVAVKSELADPLWLEVGPAPVCMSFVRDTLSTPASKMTHSLQPKTSNWMSLSKTLAAMYTSGVDIDWLAFHAPYESDLKLLTLPSYAWDVRNFWITHTDNATEVVSEQSPVTSSEPLISTCAQYLVAKSSSPNIRVALRASIADPGFMGLMDGHKMQGIGLCSGSVFCEAAFAATKYALEYSGRKNITQPWLTLHDPKLLLPLTKKSVGPDGDLVTTAVMYSSSAETISITFQVTSASASYDLGTCVVKVRDPTRSQVEWDRISYFIKARMDETIKNAKEGRGHRMQPEVFYALFGNAVEFAPDFQGINEAYIAKDFQEAAAVVTLPHDPSGTRFTFSPYWGEALVHLAGFMVNGNPSKSPKTTFIVMGFASVEQTAPLIPGKQYMTYTRISKWVKDTAYCDAIVFDPESFTIVLQCVDIRYQELPRATWKHVLEGPHETPIVHAQRPPVRNSKKYVETRELQQPSSATVPAQETTIDEPEQQEGEPAAGARLFNAILDSISKATGTDPSEFRDDTMIADLGVDSIMAIEVVATVKDVSGLELPAAFVFEYPTIGDLRKEFRANEPTVENPRFSATPSSAEASIPSSPSSLAHPMSDSASSLSPSDREEALPLERQSMTKREQKRPVKIDDDASPEPVVRIMLLQGRPGSKRIPFYMMADGTGTIATYIHLPPFKSKMPVYGIDSPFLRCPKRLTKEVGIEGVAKLIVDALMKTQPEGPLMIGGFSAGSIVAYEVCRQLGRAGRQVEGLVLIDMCCPRSSLLDEDKMNSEDDASFAIFESAVTKDGLWSSSETTQQHFRAYHVAMHAYHPPYMLEEERPTRTAVIWAEKGMVNRVMGNEKLMKMLVEQGIPMTSYPGYMEDPKLGAFACLVPDRTKADLGPNGWEKYTAGEVLTLSVAGDHLDLPMPGHVHLLHAQMEKAFAYIKG.

The tract at residues 9–246 (LLFGDVTDPW…DELNIHALQH (238 aa)) is N-terminal acylcarrier protein transacylase domain (SAT). One can recognise a Ketosynthase family 3 (KS3) domain in the interval 366–798 (NDGIAIVGMA…GGNACLLLED (433 aa)). Residues Cys-543, His-678, and His-717 each act as for beta-ketoacyl synthase activity in the active site. The segment at 895-1199 (VFVFTGQGSH…MTHSLQPKTS (305 aa)) is malonyl-CoA:ACP transacylase (MAT) domain. Residue Ser-986 is the For acyl/malonyl transferase activity of the active site. Residues 1268–1414 (EPLISTCAQY…DPTRSQVEWD (147 aa)) form an N-terminal hotdog fold region. The region spanning 1268–1584 (EPLISTCAQY…YQELPRATWK (317 aa)) is the PKS/mFAS DH domain. The tract at residues 1304–1581 (MDGHKMQGIG…DIRYQELPRA (278 aa)) is product template (PT) domain. The interval 1435–1584 (RGHRMQPEVF…YQELPRATWK (150 aa)) is C-terminal hotdog fold. Residues 1613 to 1639 (RELQQPSSATVPAQETTIDEPEQQEGE) form a disordered region. The segment covering 1615-1628 (LQQPSSATVPAQET) has biased composition (polar residues). A Carrier domain is found at 1641-1718 (AAGARLFNAI…DLRKEFRANE (78 aa)). At Ser-1678 the chain carries O-(pantetheine 4'-phosphoryl)serine. The tract at residues 1721–1784 (VENPRFSATP…EQKRPVKIDD (64 aa)) is disordered. Low complexity predominate over residues 1727–1757 (SATPSSAEASIPSSPSSLAHPMSDSASSLSP). Residues 1758–1784 (SDREEALPLERQSMTKREQKRPVKIDD) are compositionally biased toward basic and acidic residues. Residues 1812 to 2057 (ADGTGTIATY…LSVAGDHLDL (246 aa)) are thioesterase (TE) domain. His-2064 serves as the catalytic For thioesterase activity.

The protein operates within mycotoxin biosynthesis. In terms of biological role, highly reducing polyketide synthase; part of the gene cluster that mediates the biosynthesis of 10,11-dehydrocurvularin, a prevalent fungal phytotoxin with heat shock response and immune-modulatory activities. The highly reducing polyketide synthase Dhc3 is responsible for biosynthesis up to the tetraketide stage. The non-reducing polyketide synthase Dhc5 then conducts four additional chain extension cycles, producing the unreduced part of the nascent octaketide from C-1 to C-8 in 10,11-dehydrocurvularin. In Alternaria cinerariae, this protein is Non-reducing polyketide synthase Dhc5.